The following is a 101-amino-acid chain: Small ribosomal subunit protein uS14 (101 aa).

The protein belongs to the universal ribosomal protein uS14 family. In terms of assembly, part of the 30S ribosomal subunit. Contacts proteins S3 and S10.

Functionally, binds 16S rRNA, required for the assembly of 30S particles and may also be responsible for determining the conformation of the 16S rRNA at the A site. The chain is Small ribosomal subunit protein uS14 from Actinobacillus succinogenes (strain ATCC 55618 / DSM 22257 / CCUG 43843 / 130Z).